The primary structure comprises 943 residues: Coiled-coil and C2 domain-containing protein 1A (943 aa).

The residue at position 91 (Thr-91) is a Phosphothreonine. Disordered stretches follow at residues 186–250 and 300–337; these read NEAD…CSPL and DLSRLPPPPDQLSPEPPLPAAQPLTSASTLTRPEVPQP. Low complexity-rich tracts occupy residues 195 to 206 and 229 to 238; these read ASGKGAAAGHSH and APSTTTPTSA. Position 248 is a phosphoserine (Ser-248). Positions 304 to 319 are enriched in pro residues; the sequence is LPPPPDQLSPEPPLPA. Residues 339 to 385 are a coiled coil; the sequence is RNLLEALEQRMERYHVAAAQAKAKGDQRKARMHERIVKQYQDAIRAH. Positions 430 to 483 are disordered; it reads NHDEGSDDEEEETPKKQNTPAASTTQLKSSPSKAPPSGPAPAGKAAPKGTSNRA. The residue at position 435 (Ser-435) is a Phosphoserine. Positions 445–456 are enriched in polar residues; that stretch reads KQNTPAASTTQL. A compositionally biased stretch (low complexity) spans 469–478; that stretch reads APAGKAAPKG. The stretch at 477–510 forms a coiled coil; that stretch reads KGTSNRAQQQLAFLEGRKKQLLQAALRAKQKNDV. Residues 630–764 enclose the C2 domain; sequence RFEQRTFSVI…ETACEVHEIL (135 aa).

This sequence belongs to the CC2D1 family. As to expression, highly expressed in brain, expression is enriched in the gray matter and strongest in the olfactory bulb.

Its subcellular location is the cytoplasm. The protein localises to the nucleus. The protein resides in the cytoskeleton. It localises to the microtubule organizing center. It is found in the centrosome. Transcription factor that binds specifically to the DRE (dual repressor element) and represses HTR1A gene transcription in neuronal cells. The combination of calcium and ATP specifically inactivates the binding with FRE. May play a role in the altered regulation of HTR1A associated with anxiety and major depression. Mediates HDAC-independent repression of HTR1A promoter in neuronal cell. Performs essential function in controlling functional maturation of synapses. In Mus musculus (Mouse), this protein is Coiled-coil and C2 domain-containing protein 1A (Cc2d1a).